The sequence spans 219 residues: Proteasome subunit beta type-9 (219 aa).

The propeptide at 1-20 (MLRAGAPTAGSFRTEEVHTG) is removed in mature form. Thr21 serves as the catalytic Nucleophile. Lys53 and Lys109 each carry N6-acetyllysine.

Belongs to the peptidase T1B family. As to quaternary structure, the 26S proteasome consists of a 20S proteasome core and two 19S regulatory subunits. The 20S proteasome core is composed of 28 subunits that are arranged in four stacked rings, resulting in a barrel-shaped structure. The two end rings are each formed by seven alpha subunits, and the two central rings are each formed by seven beta subunits. The catalytic chamber with the active sites is on the inside of the barrel. Component of the immunoproteasome, where it displaces the equivalent housekeeping subunit PSMB6. Component of the spermatoproteasome, a form of the proteasome specifically found in testis. In terms of processing, autocleaved. The resulting N-terminal Thr residue of the mature subunit is responsible for the nucleophile proteolytic activity.

It is found in the cytoplasm. It localises to the nucleus. The enzyme catalyses Cleavage of peptide bonds with very broad specificity.. The proteasome is a multicatalytic proteinase complex which is characterized by its ability to cleave peptides with Arg, Phe, Tyr, Leu, and Glu adjacent to the leaving group at neutral or slightly basic pH. The proteasome has an ATP-dependent proteolytic activity. This subunit is involved in antigen processing to generate class I binding peptides. The chain is Proteasome subunit beta type-9 (Psmb9) from Mus spicilegus (Steppe mouse).